A 265-amino-acid chain; its full sequence is Small ribosomal subunit protein eS4 (265 aa).

Residues 42–104 (LPLILIIRNR…TGENYRLLYD (63 aa)) form the S4 RNA-binding domain.

The protein belongs to the eukaryotic ribosomal protein eS4 family.

It localises to the cytoplasm. In Oryza sativa subsp. japonica (Rice), this protein is Small ribosomal subunit protein eS4 (RPS4).